Consider the following 384-residue polypeptide: Sensor-like histidine kinase SenX3 (384 aa).

The 217-residue stretch at 153-369 (NVSHELKTPV…TFTLSIPEYP (217 aa)) folds into the Histidine kinase domain. H156 bears the Phosphohistidine; by autocatalysis mark. Residues 360–384 (TFTLSIPEYPDPESHSDEREDQRER) form a disordered region. Residues 371–384 (PESHSDEREDQRER) are compositionally biased toward basic and acidic residues.

Post-translationally, autophosphorylated.

Its subcellular location is the cell membrane. It catalyses the reaction ATP + protein L-histidine = ADP + protein N-phospho-L-histidine.. Member of the two-component regulatory system SenX3/RegX3 involved in stress response. The system is involved in phosphate starvation response. Probably exhibits a dual role as a phosphatase or a phosphodonor for the response regulator RegX3, depending upon phosphate availability. When environmental phosphate is abundant, SenX3 is required to maintain RegX3 in an unphosphorylated state, where it is unable to bind target DNA. Under conditions of phosphate limitation, SenX3 autophosphorylates and then transfers the phosphate group to RegX3. Probably does not itself sense phosphate concentrations, which may be relayed to SenX3 by the PstSCAB phosphate transporter system. This chain is Sensor-like histidine kinase SenX3, found in Mycolicibacterium smegmatis (strain ATCC 700084 / mc(2)155) (Mycobacterium smegmatis).